Here is a 316-residue protein sequence, read N- to C-terminus: Glutathione synthetase (316 aa).

One can recognise an ATP-grasp domain in the interval 123 to 309; that stretch reads NEKISTLSFK…ISGILLDSIE (187 aa). 149–206 lines the ATP pocket; that stretch reads FQEKFGDIILKPINKMGGDSVFYVKKNDPNVSVIIDQLTNYGNSFCLIQEYIKEILNG. Mg(2+) contacts are provided by glutamate 280 and asparagine 282.

This sequence belongs to the prokaryotic GSH synthase family. It depends on Mg(2+) as a cofactor. Mn(2+) is required as a cofactor.

It carries out the reaction gamma-L-glutamyl-L-cysteine + glycine + ATP = glutathione + ADP + phosphate + H(+). It participates in sulfur metabolism; glutathione biosynthesis; glutathione from L-cysteine and L-glutamate: step 2/2. This Wigglesworthia glossinidia brevipalpis protein is Glutathione synthetase.